Consider the following 270-residue polypeptide: tRNA pseudouridine synthase A (270 aa).

D60 acts as the Nucleophile in catalysis. Y118 lines the substrate pocket.

The protein belongs to the tRNA pseudouridine synthase TruA family. In terms of assembly, homodimer.

It catalyses the reaction uridine(38/39/40) in tRNA = pseudouridine(38/39/40) in tRNA. In terms of biological role, formation of pseudouridine at positions 38, 39 and 40 in the anticodon stem and loop of transfer RNAs. The protein is tRNA pseudouridine synthase A of Salmonella typhimurium (strain LT2 / SGSC1412 / ATCC 700720).